A 375-amino-acid polypeptide reads, in one-letter code: Citrate synthase (375 aa).

Catalysis depends on residues histidine 266 and aspartate 317.

This sequence belongs to the citrate synthase family. As to quaternary structure, homohexamer.

It catalyses the reaction oxaloacetate + acetyl-CoA + H2O = citrate + CoA + H(+). It functions in the pathway carbohydrate metabolism; tricarboxylic acid cycle; isocitrate from oxaloacetate: step 1/2. Allosterically inhibited by NADH. This chain is Citrate synthase (gltA), found in Mycolicibacterium smegmatis (Mycobacterium smegmatis).